Here is a 296-residue protein sequence, read N- to C-terminus: Farnesyl diphosphate synthase (296 aa).

Residues Lys46, Arg49, and His78 each coordinate isopentenyl diphosphate. Residues Asp85 and Asp91 each coordinate Mg(2+). Arg96 serves as a coordination point for (2E)-geranyl diphosphate. Position 97 (Arg97) interacts with isopentenyl diphosphate. Positions 182, 183, 220, and 237 each coordinate (2E)-geranyl diphosphate.

The protein belongs to the FPP/GGPP synthase family. The cofactor is Mg(2+).

Its subcellular location is the cytoplasm. It catalyses the reaction isopentenyl diphosphate + (2E)-geranyl diphosphate = (2E,6E)-farnesyl diphosphate + diphosphate. The polypeptide is Farnesyl diphosphate synthase (ispA) (Bacillus subtilis (strain 168)).